We begin with the raw amino-acid sequence, 103 residues long: Large ribosomal subunit protein uL24 (103 aa).

Belongs to the universal ribosomal protein uL24 family. Part of the 50S ribosomal subunit.

Its function is as follows. One of two assembly initiator proteins, it binds directly to the 5'-end of the 23S rRNA, where it nucleates assembly of the 50S subunit. Functionally, one of the proteins that surrounds the polypeptide exit tunnel on the outside of the subunit. In Roseobacter denitrificans (strain ATCC 33942 / OCh 114) (Erythrobacter sp. (strain OCh 114)), this protein is Large ribosomal subunit protein uL24.